Here is a 431-residue protein sequence, read N- to C-terminus: Tol-Pal system protein TolB (431 aa).

The N-terminal stretch at Met-1 to Ala-26 is a signal peptide. The segment at Pro-411–Gln-431 is disordered.

Belongs to the TolB family. As to quaternary structure, the Tol-Pal system is composed of five core proteins: the inner membrane proteins TolA, TolQ and TolR, the periplasmic protein TolB and the outer membrane protein Pal. They form a network linking the inner and outer membranes and the peptidoglycan layer.

It localises to the periplasm. Its function is as follows. Part of the Tol-Pal system, which plays a role in outer membrane invagination during cell division and is important for maintaining outer membrane integrity. This Burkholderia vietnamiensis (strain G4 / LMG 22486) (Burkholderia cepacia (strain R1808)) protein is Tol-Pal system protein TolB.